The primary structure comprises 171 residues: Co-chaperone protein HscB (171 aa).

The 73-residue stretch at 2 to 74 (DYFTLFGLPA…LTRAEYLLSL (73 aa)) folds into the J domain.

It belongs to the HscB family. In terms of assembly, interacts with HscA and stimulates its ATPase activity. Interacts with IscU.

Functionally, co-chaperone involved in the maturation of iron-sulfur cluster-containing proteins. Seems to help targeting proteins to be folded toward HscA. This is Co-chaperone protein HscB from Salmonella heidelberg (strain SL476).